A 118-amino-acid chain; its full sequence is MKLPIPYQMAVSTVHLKLTDQSAKKDRYGRTVPTWEGDITKCVVNMQTTYSGTNNDRQIVANGLIVMYAGYSNPIPTLTKENLGSKLTYQGLDYTVTSLNRFDQPGTEDLYCYELEVI.

This sequence belongs to the Lactobacillus delbrueckii bacteriophages ORF5 protein family.

This is an uncharacterized protein from Lactobacillus delbrueckii (Lactococcus delbrueckii bacteriophage LL-H).